A 224-amino-acid polypeptide reads, in one-letter code: Small ribosomal subunit protein uS7 (224 aa).

It belongs to the universal ribosomal protein uS7 family. Part of the 30S ribosomal subunit.

Functionally, one of the primary rRNA binding proteins, it binds directly to 16S rRNA where it nucleates assembly of the head domain of the 30S subunit. Is located at the subunit interface close to the decoding center. The chain is Small ribosomal subunit protein uS7 from Caldivirga maquilingensis (strain ATCC 700844 / DSM 13496 / JCM 10307 / IC-167).